The primary structure comprises 145 residues: Putative pre-16S rRNA nuclease (145 aa).

The protein belongs to the YqgF nuclease family.

The protein localises to the cytoplasm. Its function is as follows. Could be a nuclease involved in processing of the 5'-end of pre-16S rRNA. This is Putative pre-16S rRNA nuclease from Sulfurihydrogenibium sp. (strain YO3AOP1).